A 487-amino-acid chain; its full sequence is uncharacterized protein (487 aa).

Disordered regions lie at residues 35 to 153 (VSRK…SGDQ), 237 to 345 (NTTK…AKAL), and 358 to 395 (QKRK…SSAA). Acidic residues predominate over residues 54–96 (FDQEDILDTVPEQTDENEDEAGDDELESEKEELDYDEEEDDED). Over residues 97-132 (RRERTSRYTSEKKGSRKDSVEGDENKKENGQDETKR) the composition is skewed to basic and acidic residues. Basic residues predominate over residues 241 to 253 (SKSRGRDTRKRRS). Positions 254 to 264 (SSYSSTSSSSD) are enriched in low complexity. Basic and acidic residues-rich tracts occupy residues 273–338 (SRSD…KHSA) and 358–383 (QKRK…KKEV). The span at 385–395 (TTVSTNTSSAA) shows a compositional bias: low complexity.

This is an uncharacterized protein from Caenorhabditis elegans.